A 307-amino-acid polypeptide reads, in one-letter code: tRNA dimethylallyltransferase (307 aa).

9 to 16 (GATGTGKS) contributes to the ATP binding site. 11-16 (TGTGKS) lines the substrate pocket.

Belongs to the IPP transferase family. In terms of assembly, monomer. Mg(2+) serves as cofactor.

The enzyme catalyses adenosine(37) in tRNA + dimethylallyl diphosphate = N(6)-dimethylallyladenosine(37) in tRNA + diphosphate. Its function is as follows. Catalyzes the transfer of a dimethylallyl group onto the adenine at position 37 in tRNAs that read codons beginning with uridine, leading to the formation of N6-(dimethylallyl)adenosine (i(6)A). This Clavibacter sepedonicus (Clavibacter michiganensis subsp. sepedonicus) protein is tRNA dimethylallyltransferase.